A 145-amino-acid chain; its full sequence is Cell wall teichoic acid glycosylation protein GtcA (145 aa).

4 consecutive transmembrane segments (helical) span residues 21–41 (ILMYLIMGGFTTLINIVTFWL), 52–69 (IANTIAWVASVLFAYFSN), 96–116 (FLTYIVDFLVMILLISGLGIN), and 121–141 (KIWTNVIVLILNYVFSKWIIF).

Belongs to the GtrA family.

It is found in the cell membrane. Its function is as follows. Involved in the decoration of cell wall teichoic acid with galactose and glucose. This Listeria innocua serovar 6a (strain ATCC BAA-680 / CLIP 11262) protein is Cell wall teichoic acid glycosylation protein GtcA (gtcA).